Here is a 260-residue protein sequence, read N- to C-terminus: Aspartate/glutamate leucyltransferase (260 aa).

The protein belongs to the R-transferase family. Bpt subfamily.

It is found in the cytoplasm. It carries out the reaction N-terminal L-glutamyl-[protein] + L-leucyl-tRNA(Leu) = N-terminal L-leucyl-L-glutamyl-[protein] + tRNA(Leu) + H(+). The enzyme catalyses N-terminal L-aspartyl-[protein] + L-leucyl-tRNA(Leu) = N-terminal L-leucyl-L-aspartyl-[protein] + tRNA(Leu) + H(+). Its function is as follows. Functions in the N-end rule pathway of protein degradation where it conjugates Leu from its aminoacyl-tRNA to the N-termini of proteins containing an N-terminal aspartate or glutamate. This Sphingomonas elodea protein is Aspartate/glutamate leucyltransferase.